The chain runs to 153 residues: Cytochrome c-type biogenesis protein CcmE (153 aa).

Residues 1–8 (MMTPRQRR) are Cytoplasmic-facing. The chain crosses the membrane as a helical; Signal-anchor for type II membrane protein span at residues 9–29 (MTWVALMVAGVSLAAFFALTA). The Periplasmic portion of the chain corresponds to 30–153 (FQKNLLYFYT…PADYSEYRKK (124 aa)). Heme contacts are provided by H124 and Y128. The segment at 134-153 (AESLKKNGGLPADYSEYRKK) is disordered.

Belongs to the CcmE/CycJ family.

It is found in the cell inner membrane. In terms of biological role, heme chaperone required for the biogenesis of c-type cytochromes. Transiently binds heme delivered by CcmC and transfers the heme to apo-cytochromes in a process facilitated by CcmF and CcmH. The chain is Cytochrome c-type biogenesis protein CcmE from Methylococcus capsulatus (strain ATCC 33009 / NCIMB 11132 / Bath).